Consider the following 604-residue polypeptide: Integrin alpha-IIb (604 aa).

The FG-GAP repeat unit spans residues 1–61 (QVLDSPFPTG…ASVQLLVQDS (61 aa)). Residues 1-558 (QVLDSPFPTG…TQLLRALEER (558 aa)) are Extracellular-facing. The Ca(2+) site is built by aspartate 22, aspartate 24, asparagine 26, tyrosine 28, and aspartate 30. 2 disulfides stabilise this stretch: cysteine 69–cysteine 80 and cysteine 86–cysteine 141. Asparagine 166 is a glycosylation site (N-linked (GlcNAc...) asparagine). Disulfide bonds link cysteine 198/cysteine 204, cysteine 270/cysteine 283, cysteine 422/cysteine 486, and cysteine 476/cysteine 481. Asparagine 276 is a glycosylation site (N-linked (GlcNAc...) asparagine). N-linked (GlcNAc...) asparagine glycosylation occurs at asparagine 527. A helical membrane pass occupies residues 559 to 584 (AIPIWWVLVGVLGGLLLLTILVLAMW). Topologically, residues 585–604 (KVGFFKRNRPPLEEDDEEGE) are cytoplasmic. Residues 587-591 (GFFKR) carry the GFFKR motif motif.

Belongs to the integrin alpha chain family. In terms of assembly, heterodimer of an alpha and a beta subunit. The alpha subunit is composed of a heavy and a light chain linked by a disulfide bond. Alpha-IIb associates with beta-3. Directly interacts with RNF181. Interacts (via C-terminus cytoplasmic tail region) with CIB1; the interaction is direct and calcium-dependent. Interacts (via C-terminus cytoplasmic tail region) with CIB2, CIB3 and CIB4; the interactions are stabilized/increased in a calcium and magnesium-dependent manner. ITGA2B:ITGB3 interacts with PPIA/CYPA; the interaction is ROS and PPIase activity-dependent and is increased in the presence of thrombin. ITGA2B:ITGB3 interacts with SELP (via C-type lectin domain); the interaction mediates cell-cell interaction and adhesion.

It localises to the membrane. Its function is as follows. Integrin alpha-IIb/beta-3 is a receptor for fibronectin, fibrinogen, plasminogen, prothrombin, thrombospondin and vitronectin. It recognizes the sequence R-G-D in a wide array of ligands. It recognizes the sequence H-H-L-G-G-G-A-K-Q-A-G-D-V in fibrinogen gamma chain. Following activation integrin alpha-IIb/beta-3 brings about platelet/platelet interaction through binding of soluble fibrinogen. This step leads to rapid platelet aggregation which physically plugs ruptured endothelial cell surface. This chain is Integrin alpha-IIb (ITGA2B), found in Papio cynocephalus (Yellow baboon).